The following is a 465-amino-acid chain: ATP synthase subunit beta (465 aa).

Residue 149–156 (GGAGVGKT) coordinates ATP.

The protein belongs to the ATPase alpha/beta chains family. In terms of assembly, F-type ATPases have 2 components, CF(1) - the catalytic core - and CF(0) - the membrane proton channel. CF(1) has five subunits: alpha(3), beta(3), gamma(1), delta(1), epsilon(1). CF(0) has three main subunits: a(1), b(2) and c(9-12). The alpha and beta chains form an alternating ring which encloses part of the gamma chain. CF(1) is attached to CF(0) by a central stalk formed by the gamma and epsilon chains, while a peripheral stalk is formed by the delta and b chains.

It localises to the cell inner membrane. The catalysed reaction is ATP + H2O + 4 H(+)(in) = ADP + phosphate + 5 H(+)(out). Its function is as follows. Produces ATP from ADP in the presence of a proton gradient across the membrane. The catalytic sites are hosted primarily by the beta subunits. The protein is ATP synthase subunit beta of Dictyoglomus turgidum (strain DSM 6724 / Z-1310).